A 299-amino-acid polypeptide reads, in one-letter code: Ankyrin repeat domain-containing protein 54 (299 aa).

Residues 1 to 27 (MAATGGGADDESRSGRSSSDGECAVAP) are disordered. Position 2 is an N-acetylalanine (A2). S62 carries the post-translational modification Phosphoserine. The short motif at 98 to 116 (RRLGPTGKEVHALKRLRDS) is the Nuclear localization signal (NLS) element. ANK repeat units follow at residues 108-137 (HALK…DPCA), 141-170 (KGRT…DPNQ), 174-203 (LGNT…RVDA), and 207-239 (AGRT…EVKQ). Residues 140–240 (DKGRTALHFA…EAVRLEVKQI (101 aa)) are LYN-binding. Residues 282–292 (LLASFTSLSLQ) carry the Nuclear export signal (NES) motif.

In terms of assembly, interacts (via ankyrin repeat region) with LYN (via SH3-domain) in an activation-independent status of LYN. Forms a multiprotein complex with LYN and HCLS1. Interacts with TSN2, VAV1, DBNL and LASP1. In terms of tissue distribution, expressed in a variety of hemopoietic cell lines and tissue with high levels in testis. Highly expressed in ciliated cells.

The protein localises to the nucleus. It is found in the cytoplasm. Its subcellular location is the midbody. Its function is as follows. Plays an important role in regulating intracellular signaling events associated with erythroid terminal differentiation. This is Ankyrin repeat domain-containing protein 54 (Ankrd54) from Mus musculus (Mouse).